A 414-amino-acid polypeptide reads, in one-letter code: Glucose-6-phosphate isomerase (414 aa).

Glutamate 266 acts as the Proton donor in catalysis. Active-site residues include histidine 292 and lysine 405.

The protein belongs to the GPI family.

Its subcellular location is the cytoplasm. It catalyses the reaction alpha-D-glucose 6-phosphate = beta-D-fructose 6-phosphate. It participates in carbohydrate biosynthesis; gluconeogenesis. It functions in the pathway carbohydrate degradation; glycolysis; D-glyceraldehyde 3-phosphate and glycerone phosphate from D-glucose: step 2/4. Catalyzes the reversible isomerization of glucose-6-phosphate to fructose-6-phosphate. The protein is Glucose-6-phosphate isomerase of Thermus thermophilus (strain ATCC BAA-163 / DSM 7039 / HB27).